The primary structure comprises 89 residues: MTVTAERKTAIIADNARANGDTGSPEVQVAILTERINNLTEHFKSHAKDNHSRRGLLMLVNKRRRLLDYLKRKDAERYTALIGKLGLRK.

Belongs to the universal ribosomal protein uS15 family. As to quaternary structure, part of the 30S ribosomal subunit. Forms a bridge to the 50S subunit in the 70S ribosome, contacting the 23S rRNA.

Its function is as follows. One of the primary rRNA binding proteins, it binds directly to 16S rRNA where it helps nucleate assembly of the platform of the 30S subunit by binding and bridging several RNA helices of the 16S rRNA. Functionally, forms an intersubunit bridge (bridge B4) with the 23S rRNA of the 50S subunit in the ribosome. In Rhizorhabdus wittichii (strain DSM 6014 / CCUG 31198 / JCM 15750 / NBRC 105917 / EY 4224 / RW1) (Sphingomonas wittichii), this protein is Small ribosomal subunit protein uS15.